The following is a 328-amino-acid chain: Putative HTH-type transcriptional regulatory protein MA_3524 (328 aa).

The region spanning Leu132–Leu190 is the HTH cro/C1-type domain. The H-T-H motif DNA-binding region spans Leu143 to Glu162.

In Methanosarcina acetivorans (strain ATCC 35395 / DSM 2834 / JCM 12185 / C2A), this protein is Putative HTH-type transcriptional regulatory protein MA_3524.